A 313-amino-acid chain; its full sequence is NF-kappa-B inhibitor delta (313 aa).

6 ANK repeats span residues 48-83 (EGDT…IREH), 84-113 (KGKT…EPNA), 117-146 (QGRS…QVDL), 152-201 (EGLT…NHTS), 206-236 (SNKT…DLRT), and 243-276 (HGNT…DPTL).

The protein belongs to the NF-kappa-B inhibitor family. In terms of assembly, interacts with NFKB1, RELA and RELB; in the nucleus.

The protein resides in the nucleus. Functionally, regulates the expression of IL-2, IL-6, and other cytokines through regulation on NF-kappa-B activity. Functions in the regulation of inflammatory responses. Involved in the induction of T helper 17 cells (Th17) differentiation upon recognition of antigen by T cell antigen receptor (TCR). May also regulate TCR-induced negative selection of thymocytes. The sequence is that of NF-kappa-B inhibitor delta (NFKBID) from Homo sapiens (Human).